A 446-amino-acid polypeptide reads, in one-letter code: Putative diacyglycerol O-acyltransferase Rv3371 (446 aa).

H129 (proton acceptor) is an active-site residue. The disordered stretch occupies residues 425-446 (SRALPSAARRGRPSVPTARARH).

It belongs to the long-chain O-acyltransferase family.

The enzyme catalyses an acyl-CoA + a 1,2-diacyl-sn-glycerol = a triacyl-sn-glycerol + CoA. The catalysed reaction is di-(9Z)-octadecenoylglycerol + (9Z)-octadecenoyl-CoA = 1,2,3-tri-(9Z-octadecenoyl)-glycerol + CoA. It participates in glycerolipid metabolism; triacylglycerol biosynthesis. In terms of biological role, catalyzes the terminal and only committed step in triacylglycerol synthesis by using diacylglycerol and fatty acyl CoA as substrates. Required for storage lipid synthesis. Its function is as follows. Upon expression in E.coli functions weakly as a triacylglycerol synthase, making triacylglycerol (TG) from diolein and long-chain fatty acyl-CoA. Has no wax synthase activity to produce wax esters. The sequence is that of Putative diacyglycerol O-acyltransferase Rv3371 from Mycobacterium tuberculosis (strain ATCC 25618 / H37Rv).